The sequence spans 224 residues: Oxaloacetate tautomerase FAHD2, mitochondrial (224 aa).

Residues M1–L30 constitute a mitochondrion transit peptide. Residues E67, E69, and D98 each coordinate Mg(2+).

It belongs to the FAH family. It depends on Mg(2+) as a cofactor. Requires Mn(2+) as cofactor.

Its subcellular location is the mitochondrion. It catalyses the reaction oxaloacetate = enol-oxaloacetate. In terms of biological role, tautomerase that converts enol-oxaloacetate, a strong inhibitor of succinate dehydrogenase, to the physiological keto form of oxaloacetate. The chain is Oxaloacetate tautomerase FAHD2, mitochondrial from Arabidopsis thaliana (Mouse-ear cress).